A 61-amino-acid polypeptide reads, in one-letter code: MDPKLLDILACPICKGPLKLTDDKSELICKADALAFPVRDGIPVMLESEARTLNVDERLDK.

The protein belongs to the UPF0434 family.

The sequence is that of UPF0434 protein Avin_14770 from Azotobacter vinelandii (strain DJ / ATCC BAA-1303).